The sequence spans 303 residues: Probable 5-dehydro-4-deoxyglucarate dehydratase (303 aa).

This sequence belongs to the DapA family.

It carries out the reaction 5-dehydro-4-deoxy-D-glucarate + H(+) = 2,5-dioxopentanoate + CO2 + H2O. It participates in carbohydrate acid metabolism; D-glucarate degradation; 2,5-dioxopentanoate from D-glucarate: step 2/2. The protein is Probable 5-dehydro-4-deoxyglucarate dehydratase of Variovorax paradoxus (strain S110).